Consider the following 512-residue polypeptide: Maturase K (512 aa).

Belongs to the intron maturase 2 family. MatK subfamily.

It localises to the plastid. It is found in the chloroplast. Usually encoded in the trnK tRNA gene intron. Probably assists in splicing its own and other chloroplast group II introns. In Platanus occidentalis (Sycamore), this protein is Maturase K.